Here is a 67-residue protein sequence, read N- to C-terminus: Beta-defensin 1 (67 aa).

Positions 1-22 are cleaved as a signal peptide; the sequence is MRIHYLLFAVLFLFLMPVPGEG. Disulfide bonds link C33/C62, C40/C55, and C45/C63.

Monomer. Homodimer. As to expression, highly expressed in tongue, nasopharyngeal mucosa and skin, and to a lower extent in the Eustachian tube, lung and trachea.

Its subcellular location is the secreted. The protein localises to the membrane. Has antibacterial activity against Gram-positive bacterium S.pneumoniae Serotype 14. Is also active against Gram-negative bacteria M.catarrhalis 1857, and non-typeable H.influenzae strains 86-028NP and 1128. Has antifungal activity against C.albicans. May have a role in maintaining sterility in the middle ear. May act as a ligand for C-C chemokine receptor CCR6. Positively regulates the sperm motility and bactericidal activity in a CCR6-dependent manner. Binds to CCR6 and triggers Ca2+ mobilization in the sperm which is important for its motility. The chain is Beta-defensin 1 (DEFB1) from Chinchilla lanigera (Long-tailed chinchilla).